A 129-amino-acid polypeptide reads, in one-letter code: Follitropin subunit beta (129 aa).

The first 20 residues, 1–20 (MKTAQFYIFFFCWKAIWCNG), serve as a signal peptide directing secretion. 6 disulfides stabilise this stretch: Cys-21/Cys-69, Cys-35/Cys-84, Cys-38/Cys-122, Cys-46/Cys-100, Cys-50/Cys-102, and Cys-105/Cys-112. N-linked (GlcNAc...) asparagine glycosylation is found at Asn-25 and Asn-42.

Belongs to the glycoprotein hormones subunit beta family. As to quaternary structure, heterodimer. The active follitropin is a heterodimer composed of an alpha chain/CGA shared with other hormones and a unique beta chain/FSHB shown here.

Its subcellular location is the secreted. Its function is as follows. Together with the alpha chain CGA constitutes follitropin, the follicle-stimulating hormone, and provides its biological specificity to the hormone heterodimer. Binds FSHR, a G protein-coupled receptor, on target cells to activate downstream signaling pathways. Follitropin is involved in follicle development and spermatogenesis in reproductive organs. The polypeptide is Follitropin subunit beta (FSHB) (Monodelphis domestica (Gray short-tailed opossum)).